A 744-amino-acid chain; its full sequence is Adenosylcobalamin-dependent ribonucleoside-triphosphate reductase (744 aa).

Cysteine 120 and cysteine 424 are joined by a disulfide. Positions serine 148–methionine 159 are effector region-1. An effector region-2 region spans residues valine 169–valine 318. Residues cysteine 413 and glutamate 415 contribute to the active site. Residues phenylalanine 570–valine 631 form an adenosylcobalamin-binding-1 region. Residues leucine 690–glutamate 729 are adenosylcobalamin-binding-2.

It belongs to the class II ribonucleoside-triphosphate reductase family. As to quaternary structure, monomer. Adenosylcob(III)alamin serves as cofactor.

The catalysed reaction is a 2'-deoxyribonucleoside 5'-triphosphate + [thioredoxin]-disulfide + H2O = a ribonucleoside 5'-triphosphate + [thioredoxin]-dithiol. Its activity is regulated as follows. Allosterically regulated by ATP and dNTP. In Lactobacillus helveticus (strain DPC 4571), this protein is Adenosylcobalamin-dependent ribonucleoside-triphosphate reductase (rtpR).